The chain runs to 539 residues: Transcription factor LG2 (539 aa).

Over residues 115–125 (MRQQQQLHSGN) the composition is skewed to polar residues. 2 disordered regions span residues 115–140 (MRQQ…SAQN) and 181–246 (KPGL…KSRL). Low complexity-rich tracts occupy residues 126-137 (SQSVGSTTDSSS) and 192-205 (QQQH…QQQL). Residues 219–242 (TRKDGKSVDAKTERRLAQNREAAR) are compositionally biased toward basic and acidic residues. The region spanning 227–271 (DAKTERRLAQNREAARKSRLRKKAYVQNLETSRVRLQQIEQELQR) is the bZIP domain. The segment at 229–249 (KTERRLAQNREAARKSRLRKK) is basic motif. The interval 255–269 (LETSRVRLQQIEQEL) is leucine-zipper. In terms of domain architecture, DOG1 spans 292 to 506 (AAMFDMEYAR…RALSNLWSSR (215 aa)). The disordered stretch occupies residues 513 to 539 (GTESVSPTGTELQPMHNQPQQNQYSGF).

It belongs to the bZIP family. In terms of assembly, interacts with NPR1/NH1 and NPR3/NH3.

Its subcellular location is the nucleus. Transcriptional regulator involved in defense response. Acts as a transcriptional activator in vitro. This chain is Transcription factor LG2, found in Oryza sativa subsp. japonica (Rice).